Reading from the N-terminus, the 251-residue chain is Gamma-glutamyl peptidase 5 (251 aa).

The region spanning Ser-17–Met-214 is the Glutamine amidotransferase type-1 domain. The Nucleophile role is filled by Cys-101. Residues His-193 and Glu-195 contribute to the active site.

Belongs to the peptidase C26 family.

It localises to the cytoplasm. The protein localises to the cytosol. Its pathway is secondary metabolite biosynthesis. Functionally, involved in glucosinolate biosynthesis. Hydrolyzes the gamma-glutamyl peptide bond of several glutathione (GSH) conjugates to produce Cys-Gly conjugates related to glucosinolates. The gamma-Glu-Cys-Gly-GSH conjugates are the sulfur-donating molecule in glucosinolate biosynthesis. This is Gamma-glutamyl peptidase 5 from Arabidopsis thaliana (Mouse-ear cress).